The following is a 416-amino-acid chain: uncharacterized protein (416 aa).

9 helical membrane passes run L5–L25, I84–V104, A128–I148, L160–W180, V192–F212, P237–L257, F263–L283, L288–T308, and I312–I332.

The protein belongs to the glycosyltransferase 83 family.

The protein resides in the cell membrane. This is an uncharacterized protein from Aquifex aeolicus (strain VF5).